A 490-amino-acid chain; its full sequence is Subtilisin-like protease 8 (490 aa).

The N-terminal stretch at 1–26 (MKGLLSLSVLPVLAYASPMIVDSIHQ) is a signal peptide. A propeptide spanning residues 27 to 134 (NAAPILSSTN…YIERDSEVHT (108 aa)) is cleaved from the precursor. One can recognise an Inhibitor I9 domain in the interval 43 to 134 (SYIVVFKKGV…YIERDSEVHT (92 aa)). Positions 144–450 (PWGLARISHR…GGSDDYKKII (307 aa)) constitute a Peptidase S8 domain. Residues Asp180 and His212 each act as charge relay system in the active site. Asn282 is a glycosylation site (N-linked (GlcNAc...) asparagine). Ser378 serves as the catalytic Charge relay system. Residue Asn456 is glycosylated (N-linked (GlcNAc...) asparagine).

This sequence belongs to the peptidase S8 family.

It localises to the secreted. Functionally, secreted subtilisin-like serine protease with keratinolytic activity that contributes to pathogenicity. The sequence is that of Subtilisin-like protease 8 (SUB8) from Arthroderma benhamiae (strain ATCC MYA-4681 / CBS 112371) (Trichophyton mentagrophytes).